The chain runs to 227 residues: MTKGILGRKVGMTQVFTESGELIAVTAVEATPNVVLQVKNIATDGYNAIQLGYQDKRTVLSNKPEQGHASKANTTPKRYVREVRDAEGEFNAGDEIKVDTFQAGDYVDVTGITKGHGFQGAIKKLGQSRGPMAHGSRYHRRPGSMGAIINRVFKGKLLPGRMGNNKRTMQNVAIVHVDVENNLLLLKGNVPGANKSLLTIKSTVKVNAKHPEVKMAGVSASATTEEA.

This sequence belongs to the universal ribosomal protein uL3 family. Part of the 50S ribosomal subunit. Forms a cluster with proteins L14 and L19.

Its function is as follows. One of the primary rRNA binding proteins, it binds directly near the 3'-end of the 23S rRNA, where it nucleates assembly of the 50S subunit. The polypeptide is Large ribosomal subunit protein uL3 (Leuconostoc citreum (strain KM20)).